Here is a 1538-residue protein sequence, read N- to C-terminus: CLIP-associating protein 1 (1538 aa).

HEAT repeat units follow at residues 87–124 (AQIGTVLPSLIDRLGDAKDSVREQDQTLLLKIMDQAAN) and 163–200 (LTLSKIVPHICNLLGDPNSQVRDAAINSLVEIYRHVGE). The tract at residues 235 to 292 (SANDKNFDDEDSVDGNRPSSASSTSSKAPPSSRRNVGMGTTRRLGSSTLGSKSSAAKE) is disordered. Ser-246 is subject to Phosphoserine. Residues 251–268 (RPSSASSTSSKAPPSSRR) are compositionally biased toward low complexity. HEAT repeat units lie at residues 405–440 (HGAEAIMPTIFNLIPNSAKIMATSGVVAVRLIIRHT) and 441–477 (HIPRLIPVITSNCTSKSVAVRRRCFEFLDLLLQEWQT). The disordered stretch occupies residues 543–783 (SDSIVSLPQS…DRFGLGQPGR (241 aa)). Ser-545, Ser-548, Ser-558, Ser-559, and Ser-568 each carry phosphoserine. The span at 548 to 567 (SLPQSDRSSSSSQESLNRPL) shows a compositional bias: low complexity. Residues 574–594 (TGSTTSRASTVSTKSVSTTGS) are compositionally biased toward low complexity. Ser-600 is subject to Phosphoserine. Over residues 606-628 (AAASAKSKVSSSSGTTPFSSAAA) the composition is skewed to low complexity. Ser-636, Ser-646, Ser-647, and Ser-649 each carry phosphoserine. Polar residues predominate over residues 645–658 (QSSGSATNVASTPD). Phosphothreonine is present on Thr-656. The interval 662–785 (RSRAKVVSQS…FGLGQPGRIP (124 aa)) is interaction with microtubules, MAPRE1 and MAPRE3. A compositionally biased stretch (low complexity) spans 673–692 (RSRSANPAGAGSRSSSPGKL). Phosphoserine occurs at positions 684, 688, 695, and 705. Gly residues predominate over residues 693 to 705 (LGSGYGGLTGGSS). A Phosphothreonine modification is found at Thr-711. Ser-714 carries the phosphoserine modification. Residues 724–733 (QGCSRETSPN) are compositionally biased toward polar residues. A phosphoserine mark is found at Ser-787, Ser-797, and Ser-823. One copy of the HEAT 5 repeat lies at 974-1011 (QQFNILMRFIVDQTQTPNLKVKVAILKYIESLARQMDP). Disordered stretches follow at residues 1080 to 1120 (HLKN…CSHG) and 1136 to 1156 (AKHPPPFSQPNSIPTAPSHKA). The segment covering 1082 to 1097 (KNSSNTSVGSPSNTIG) has biased composition (polar residues). A Phosphoserine modification is found at Ser-1091. Phosphothreonine is present on residues Thr-1095 and Thr-1099. A compositionally biased stretch (low complexity) spans 1106–1115 (SRTSPLTSPT). Ser-1113 is modified (phosphoserine). Phosphoserine occurs at positions 1196 and 1223. The segment at 1215 to 1238 (VSRDGGAASPATEGRGGSEVEGGR) is disordered. An interaction with CLIP2 region spans residues 1254–1538 (RAFPGPRARD…SSSSDVSTHS (285 aa)). Residues 1254 to 1538 (RAFPGPRARD…SSSSDVSTHS (285 aa)) form an interaction with PHLDB2 and RSN region. The segment at 1256 to 1538 (FPGPRARDYN…SSSSDVSTHS (283 aa)) is localization to kinetochores. Residues 1299–1330 (DHSDLVADLLKELSNHNERVEERKGALLELLK) adopt a coiled-coil conformation. HEAT repeat units follow at residues 1342–1379 (EHFKTILLLLLETLGDKDHSIRALALRVLREILRNQPA) and 1460–1497 (QLLVDIIPGLLQGYDNTESSVRKASVFCLVAIYSVIGE).

This sequence belongs to the CLASP family. As to quaternary structure, interacts with CLIP2, ERC1, MAPRE1, MAPRE3, microtubules, PHLDB2 and RSN. The interaction with ERC1 may be mediated by PHLDB2. Interacts with GCC2; recruits CLASP1 to Golgi membranes. Interacts with MACF1. Interacts with mtcl2 and MTCL1.

The protein resides in the cytoplasm. It is found in the cytoskeleton. Its subcellular location is the microtubule organizing center. The protein localises to the centrosome. It localises to the chromosome. The protein resides in the centromere. It is found in the kinetochore. Its subcellular location is the spindle. The protein localises to the golgi apparatus. It localises to the trans-Golgi network. Functionally, microtubule plus-end tracking protein that promotes the stabilization of dynamic microtubules. Involved in the nucleation of noncentrosomal microtubules originating from the trans-Golgi network (TGN). Required for the polarization of the cytoplasmic microtubule arrays in migrating cells towards the leading edge of the cell. May act at the cell cortex to enhance the frequency of rescue of depolymerizing microtubules by attaching their plus-ends to cortical platforms composed of ERC1 and PHLDB2. This cortical microtubule stabilizing activity is regulated at least in part by phosphatidylinositol 3-kinase signaling. Also performs a similar stabilizing function at the kinetochore which is essential for the bipolar alignment of chromosomes on the mitotic spindle. This is CLIP-associating protein 1 (CLASP1) from Homo sapiens (Human).